A 292-amino-acid chain; its full sequence is CCR4-NOT transcription complex subunit 8 (292 aa).

Positions 40, 42, 161, and 230 each coordinate a divalent metal cation.

The protein belongs to the CAF1 family. In terms of assembly, component of the CCR4-NOT complex; distinct complexes seem to exist that differ in the participation of probably mutually exclusive catalytic subunits; the complex contains two deadenylase subunits, CNOT6 or CNOT6L, and CNOT7 or CNOT8. In the complex interacts directly with CNOT1. Interacts with BTG1, BTG2 and TOB1. Interacts with BTG4.

It is found in the cytoplasm. It localises to the nucleus. The catalysed reaction is Exonucleolytic cleavage of poly(A) to 5'-AMP.. Functionally, has 3'-5' poly(A) exoribonuclease activity for synthetic poly(A) RNA substrate. Its function seems to be partially redundant with that of CNOT7. Catalytic component of the CCR4-NOT complex which is linked to various cellular processes including bulk mRNA degradation, miRNA-mediated repression, translational repression during translational initiation and general transcription regulation. During miRNA-mediated repression the complex also seems to act as translational repressor during translational initiation. Additional complex functions may be a consequence of its influence on mRNA expression. Associates with members of the BTG family such as TOB1 and BTG2 and is required for their anti-proliferative activity. This chain is CCR4-NOT transcription complex subunit 8 (Cnot8), found in Mus musculus (Mouse).